A 376-amino-acid chain; its full sequence is Chaperone protein DnaJ (376 aa).

One can recognise a J domain in the interval 5–70 (DYYEVLGVAK…QKRAAYDQYG (66 aa)). The CR-type zinc finger occupies 136–214 (GYDTQIRVPS…CHGSGKVKET (79 aa)). Residues Cys149, Cys152, Cys166, Cys169, Cys188, Cys191, Cys202, and Cys205 each coordinate Zn(2+). 4 CXXCXGXG motif repeats span residues 149 to 156 (CGVCHGSG), 166 to 173 (CPTCHGQG), 188 to 195 (CPKCHGTG), and 202 to 209 (CAHCHGSG).

The protein belongs to the DnaJ family. In terms of assembly, homodimer. Requires Zn(2+) as cofactor.

It is found in the cytoplasm. Functionally, participates actively in the response to hyperosmotic and heat shock by preventing the aggregation of stress-denatured proteins and by disaggregating proteins, also in an autonomous, DnaK-independent fashion. Unfolded proteins bind initially to DnaJ; upon interaction with the DnaJ-bound protein, DnaK hydrolyzes its bound ATP, resulting in the formation of a stable complex. GrpE releases ADP from DnaK; ATP binding to DnaK triggers the release of the substrate protein, thus completing the reaction cycle. Several rounds of ATP-dependent interactions between DnaJ, DnaK and GrpE are required for fully efficient folding. Also involved, together with DnaK and GrpE, in the DNA replication of plasmids through activation of initiation proteins. In Burkholderia mallei (strain NCTC 10229), this protein is Chaperone protein DnaJ.